The following is a 148-amino-acid chain: UPF0756 membrane protein YeaL (148 aa).

The next 4 helical transmembrane spans lie at alanine 14–valine 34, leucine 51–leucine 71, leucine 86–methionine 106, and valine 121–valine 141.

The protein belongs to the UPF0756 family.

The protein localises to the cell membrane. This is UPF0756 membrane protein YeaL from Escherichia coli O127:H6 (strain E2348/69 / EPEC).